Here is a 312-residue protein sequence, read N- to C-terminus: MSRPRKRWRDVDGVFLLDKPQGMSSNDIMQKVKRLFQANKAGHTGALDPLATGMLPICLGEATKFSQFLLDADKRYLVTAKLGERTDTSDAEGQVVETREVNLETQQILTALEQFRGDILQVPTMFSALKHNGKPLYEYARQGITVEREARPITIFELNFIEYNAPFLTLEVHCSKGTYIRTLVDDLGEVLGCGAHVTMLRRTAVADYPVAEMMPINELQLLAESFPLSELDRLLLPTDTAVSKLPALHLDAEQSKAIGFGQRVKFANEQQLSGQVRLFSAENLFLGVLNRREYYSPTTINYTIRITSLPFL.

Aspartate 48 functions as the Nucleophile in the catalytic mechanism.

The protein belongs to the pseudouridine synthase TruB family. Type 1 subfamily.

The catalysed reaction is uridine(55) in tRNA = pseudouridine(55) in tRNA. Functionally, responsible for synthesis of pseudouridine from uracil-55 in the psi GC loop of transfer RNAs. This is tRNA pseudouridine synthase B from Haemophilus influenzae (strain ATCC 51907 / DSM 11121 / KW20 / Rd).